A 162-amino-acid chain; its full sequence is Cytochrome c-type biogenesis protein CcmE (162 aa).

Over 1 to 7 the chain is Cytoplasmic; it reads MTRKQRR. A helical; Signal-anchor for type II membrane protein membrane pass occupies residues 8–28; sequence LTMIGGALVVLGIAAALVLNA. Over 29–162 the chain is Periplasmic; that stretch reads LRDSIVFFST…EASSKQEVSQ (134 aa). Heme is bound by residues His-122 and Tyr-126. A disordered region spans residues 140–162; sequence HWKDDYGAQPGAAEASSKQEVSQ.

Belongs to the CcmE/CycJ family.

The protein localises to the cell inner membrane. Heme chaperone required for the biogenesis of c-type cytochromes. Transiently binds heme delivered by CcmC and transfers the heme to apo-cytochromes in a process facilitated by CcmF and CcmH. The sequence is that of Cytochrome c-type biogenesis protein CcmE from Nitrobacter winogradskyi (strain ATCC 25391 / DSM 10237 / CIP 104748 / NCIMB 11846 / Nb-255).